Here is a 115-residue protein sequence, read N- to C-terminus: MHVFNFAALFTVLATFTATAAAADQGSNTFDQRYQGYPWRPANGPIREEKQENVGHRRGGAEYFTSGSPSIAAEDYSAKNAPSRFEQWKAQQKERAERKQDRGLNGIRRVENYYP.

Residues 1-22 (MHVFNFAALFTVLATFTATAAA) form the signal peptide. Residues 24–115 (DQGSNTFDQR…GIRRVENYYP (92 aa)) form a disordered region. 2 stretches are compositionally biased toward basic and acidic residues: residues 46 to 55 (IREEKQENVG) and 91 to 115 (QQKE…NYYP).

The protein resides in the secreted. It localises to the host cytoplasm. Its function is as follows. Secreted effector involved in biotrophic colonization of plant cells. Induces an early, basal defense response in susceptible rice, including rapid callose deposition and ROS production in leaves and calli. Also promotes sporulation and mycelia growth suggesting a role across the whole process of interaction, from the biotrophic phase to sporulation. The chain is Biotrophy-associated secreted protein 1 from Pyricularia oryzae (strain 70-15 / ATCC MYA-4617 / FGSC 8958) (Rice blast fungus).